Consider the following 427-residue polypeptide: Glutamate-1-semialdehyde 2,1-aminomutase (427 aa).

N6-(pyridoxal phosphate)lysine is present on lysine 265.

It belongs to the class-III pyridoxal-phosphate-dependent aminotransferase family. HemL subfamily. As to quaternary structure, homodimer. Pyridoxal 5'-phosphate serves as cofactor.

The protein localises to the cytoplasm. It carries out the reaction (S)-4-amino-5-oxopentanoate = 5-aminolevulinate. It functions in the pathway porphyrin-containing compound metabolism; protoporphyrin-IX biosynthesis; 5-aminolevulinate from L-glutamyl-tRNA(Glu): step 2/2. This chain is Glutamate-1-semialdehyde 2,1-aminomutase, found in Burkholderia ambifaria (strain MC40-6).